The chain runs to 574 residues: Cholinesterase (574 aa).

Asn57 carries an N-linked (GlcNAc...) asparagine glycan. A disulfide bridge connects residues Cys65 and Cys92. N-linked (GlcNAc...) asparagine glycosylation is present at Asn106. Residue 116–117 (GG) participates in substrate binding. Ser198 acts as the Acyl-ester intermediate in catalysis. Phosphoserine is present on Ser198. N-linked (GlcNAc...) asparagine glycosylation is found at Asn241 and Asn256. The cysteines at positions 252 and 263 are disulfide-linked. Glu325 (charge relay system) is an active-site residue. A glycan (N-linked (GlcNAc...) asparagine) is linked at Asn341. Cys400 and Cys519 are joined by a disulfide. The Charge relay system role is filled by His438. Residues Asn455, Asn481, and Asn486 are each glycosylated (N-linked (GlcNAc...) asparagine).

This sequence belongs to the type-B carboxylesterase/lipase family. In terms of assembly, homotetramer; disulfide-linked. Dimer of dimers. In terms of tissue distribution, detected in blood plasma (at protein level). Present in most cells except erythrocytes.

The protein resides in the secreted. The catalysed reaction is an acylcholine + H2O = a carboxylate + choline + H(+). In terms of biological role, esterase with broad substrate specificity. Contributes to the inactivation of the neurotransmitter acetylcholine. Can degrade neurotoxic organophosphate esters. This chain is Cholinesterase (BCHE), found in Equus caballus (Horse).